The primary structure comprises 161 residues: Carboxysome assembly protein CcmN (161 aa).

The segment at L111 to H140 is disordered. Polar residues predominate over residues T116 to A137. Residues V144–R161 carry the Encapsulation peptide motif.

Belongs to the CcmN family. In terms of assembly, interacts with CcmM via the N-terminus of CcmN. Interacts with CcmK2 via the 18 C-terminal residues.

It is found in the carboxysome. Required for carboxysome formation; the N-terminus interacts with CcmM which itself binds RuBisCO (ribulose bisphosphate carboxylase, rbcL-rbcS), while the C-terminal 18 residues interact with carboxysome shell protein CcmK2. Required for growth in normal air. Its function is as follows. Beta-carboxysome assembly initiates when soluble RuBisCO is condensed into a liquid matrix in a pre-carboxysome by the RbcS-like domains of probably both CcmM58 and CcmM35. CcmN interacts with the N-terminus of CcmM58, and then recruits the CcmK2 major shell protein via CcmN's encapsulation peptide. Shell formation requires CcmK proteins and CcmO. CcmL caps the otherwise elongated carboxysome. Once fully encapsulated carboxysomes are formed, they migrate within the cell probably via interactions with the cytoskeleton. In Synechococcus elongatus (strain ATCC 33912 / PCC 7942 / FACHB-805) (Anacystis nidulans R2), this protein is Carboxysome assembly protein CcmN.